A 195-amino-acid polypeptide reads, in one-letter code: Imidazoleglycerol-phosphate dehydratase (195 aa).

Belongs to the imidazoleglycerol-phosphate dehydratase family.

It localises to the cytoplasm. It catalyses the reaction D-erythro-1-(imidazol-4-yl)glycerol 3-phosphate = 3-(imidazol-4-yl)-2-oxopropyl phosphate + H2O. It functions in the pathway amino-acid biosynthesis; L-histidine biosynthesis; L-histidine from 5-phospho-alpha-D-ribose 1-diphosphate: step 6/9. This is Imidazoleglycerol-phosphate dehydratase from Polynucleobacter necessarius subsp. necessarius (strain STIR1).